We begin with the raw amino-acid sequence, 124 residues long: Ribonuclease pancreatic (124 aa).

Positions 1 to 13 (KESAAAKFERQHM) are enriched in basic and acidic residues. The interval 1-24 (KESAAAKFERQHMDSSTSSASSSN) is disordered. Residues Lys7 and Arg10 each contribute to the substrate site. Catalysis depends on His12, which acts as the Proton acceptor. 4 cysteine pairs are disulfide-bonded: Cys26-Cys84, Cys40-Cys95, Cys58-Cys110, and Cys65-Cys72. Residue Asn34 is glycosylated (N-linked (GlcNAc...) asparagine; partial). Substrate contacts are provided by residues 41 to 45 (KPVNT), Lys66, and Arg85. Residue His119 is the Proton donor of the active site.

Belongs to the pancreatic ribonuclease family. In terms of assembly, monomer. Interacts with and forms tight 1:1 complexes with RNH1. Dimerization of two such complexes may occur. Interaction with RNH1 inhibits this protein. Pancreas.

It is found in the secreted. It catalyses the reaction an [RNA] containing cytidine + H2O = an [RNA]-3'-cytidine-3'-phosphate + a 5'-hydroxy-ribonucleotide-3'-[RNA].. The catalysed reaction is an [RNA] containing uridine + H2O = an [RNA]-3'-uridine-3'-phosphate + a 5'-hydroxy-ribonucleotide-3'-[RNA].. In terms of biological role, endonuclease that catalyzes the cleavage of RNA on the 3' side of pyrimidine nucleotides. Acts on single-stranded and double-stranded RNA. The sequence is that of Ribonuclease pancreatic (RNASE1) from Ovis aries (Sheep).